A 149-amino-acid polypeptide reads, in one-letter code: Deoxyuridine 5'-triphosphate nucleotidohydrolase (149 aa).

Residues 68–70, Asn-81, 85–87, and Lys-95 each bind substrate; these read RSG and TVD.

It belongs to the dUTPase family. The cofactor is Mg(2+).

It carries out the reaction dUTP + H2O = dUMP + diphosphate + H(+). The protein operates within pyrimidine metabolism; dUMP biosynthesis; dUMP from dCTP (dUTP route): step 2/2. Its function is as follows. This enzyme is involved in nucleotide metabolism: it produces dUMP, the immediate precursor of thymidine nucleotides and it decreases the intracellular concentration of dUTP so that uracil cannot be incorporated into DNA. The sequence is that of Deoxyuridine 5'-triphosphate nucleotidohydrolase from Neorickettsia sennetsu (strain ATCC VR-367 / Miyayama) (Ehrlichia sennetsu).